The sequence spans 307 residues: Ribosomal RNA small subunit methyltransferase H (307 aa).

S-adenosyl-L-methionine contacts are provided by residues 32-34 (GGH), Asp52, Phe78, Asp99, and Gln106.

It belongs to the methyltransferase superfamily. RsmH family.

The protein resides in the cytoplasm. It carries out the reaction cytidine(1402) in 16S rRNA + S-adenosyl-L-methionine = N(4)-methylcytidine(1402) in 16S rRNA + S-adenosyl-L-homocysteine + H(+). Functionally, specifically methylates the N4 position of cytidine in position 1402 (C1402) of 16S rRNA. This chain is Ribosomal RNA small subunit methyltransferase H, found in Acinetobacter baumannii (strain SDF).